The chain runs to 112 residues: uncharacterized protein (112 aa).

Residues 5-112 enclose the HIT domain; that stretch reads IFQKIIKGII…LLGGKKLNKI (108 aa). The short motif at 98–102 is the Histidine triad motif element; the sequence is HLHLH.

This is an uncharacterized protein from Buchnera aphidicola subsp. Baizongia pistaciae (strain Bp).